Here is a 305-residue protein sequence, read N- to C-terminus: Transcription factor bHLH18 (305 aa).

Positions 41–67 are disordered; sequence LKTTHISPNLHPFSSSNPPPPKHQPSS. Residues 44 to 56 are compositionally biased toward polar residues; sequence THISPNLHPFSSS. The bHLH domain occupies 122–171; it reads SNAQDHILAERKRREKLTQRFVALSALIPGLKKMDKASVLGDAIKHIKYL. Residues 201 to 224 are disordered; the sequence is DENHQPSSSSSSDGNRNSSSSNLP. Residues 207–222 show a composition bias toward low complexity; the sequence is SSSSSSDGNRNSSSSN.

Homodimer. Expressed in roots.

The protein localises to the nucleus. The protein is Transcription factor bHLH18 (BHLH18) of Arabidopsis thaliana (Mouse-ear cress).